The primary structure comprises 314 residues: Serine hydrolase-like protein 2 (314 aa).

The region spanning 33 to 293 (PPVLCLHGWL…GNHCVHMSEP (261 aa)) is the AB hydrolase-1 domain. The active site involves S108.

The protein belongs to the AB hydrolase superfamily.

The protein resides in the cytoplasm. It localises to the perinuclear region. The protein localises to the peroxisome. In terms of biological role, probable serine hydrolase. May be related to cell muscle hypertrophy. In Homo sapiens (Human), this protein is Serine hydrolase-like protein 2 (SERHL2).